Consider the following 378-residue polypeptide: Probable tRNA sulfurtransferase (378 aa).

In terms of domain architecture, THUMP spans 51 to 153 (DANLEKLQYV…SDKTYLFSKT (103 aa)). Residues 171 to 172 (LM), 196 to 197 (SF), Arg-253, Gly-275, and Gln-284 each bind ATP.

It belongs to the ThiI family.

It is found in the cytoplasm. It carries out the reaction [ThiI sulfur-carrier protein]-S-sulfanyl-L-cysteine + a uridine in tRNA + 2 reduced [2Fe-2S]-[ferredoxin] + ATP + H(+) = [ThiI sulfur-carrier protein]-L-cysteine + a 4-thiouridine in tRNA + 2 oxidized [2Fe-2S]-[ferredoxin] + AMP + diphosphate. It catalyses the reaction [ThiS sulfur-carrier protein]-C-terminal Gly-Gly-AMP + S-sulfanyl-L-cysteinyl-[cysteine desulfurase] + AH2 = [ThiS sulfur-carrier protein]-C-terminal-Gly-aminoethanethioate + L-cysteinyl-[cysteine desulfurase] + A + AMP + 2 H(+). Its pathway is cofactor biosynthesis; thiamine diphosphate biosynthesis. Functionally, catalyzes the ATP-dependent transfer of a sulfur to tRNA to produce 4-thiouridine in position 8 of tRNAs, which functions as a near-UV photosensor. Also catalyzes the transfer of sulfur to the sulfur carrier protein ThiS, forming ThiS-thiocarboxylate. This is a step in the synthesis of thiazole, in the thiamine biosynthesis pathway. The sulfur is donated as persulfide by IscS. This chain is Probable tRNA sulfurtransferase, found in Mycoplasmopsis agalactiae (strain NCTC 10123 / CIP 59.7 / PG2) (Mycoplasma agalactiae).